Reading from the N-terminus, the 592-residue chain is Cyclin-dependent kinase-like 3 (592 aa).

The region spanning 4–286 is the Protein kinase domain; it reads YETLGKVGEG…SSDLLHHEYF (283 aa). ATP-binding positions include 10 to 18 and K33; that span reads VGEGSYGTV. The [NKR]KIAxRE motif lies at 44 to 50; the sequence is NKIAMRE. D125 functions as the Proton acceptor in the catalytic mechanism. T158 carries the phosphothreonine modification. Position 160 is a phosphotyrosine (Y160). Basic and acidic residues predominate over residues 368-379; sequence GDISEPKKKEYE. Disordered regions lie at residues 368 to 390 and 459 to 485; these read GDIS…ANEN and RAKK…PGPI. A compositionally biased stretch (polar residues) spans 466-477; the sequence is SSQSIGQVMPNS.

Belongs to the protein kinase superfamily. CMGC Ser/Thr protein kinase family. CDC2/CDKX subfamily.

It is found in the cytoplasm. The catalysed reaction is L-seryl-[protein] + ATP = O-phospho-L-seryl-[protein] + ADP + H(+). The enzyme catalyses L-threonyl-[protein] + ATP = O-phospho-L-threonyl-[protein] + ADP + H(+). The chain is Cyclin-dependent kinase-like 3 from Homo sapiens (Human).